A 138-amino-acid chain; its full sequence is Basic phospholipase A2 Mtx-b (138 aa).

Residues 1 to 16 (MRALWIVAVLLVGVEG) form the signal peptide. 7 disulfide bridges follow: Cys-42-Cys-131, Cys-44-Cys-60, Cys-59-Cys-111, Cys-65-Cys-138, Cys-66-Cys-104, Cys-73-Cys-97, and Cys-91-Cys-102. Residues Tyr-43, Gly-45, and Gly-47 each coordinate Ca(2+). His-63 is a catalytic residue. Residue Asp-64 participates in Ca(2+) binding. Asp-105 is a catalytic residue.

As to quaternary structure, heterodimer of an acidic subunit and a basic chain. The acidic subunit is non-toxic, without enzymatic activity and comprises 3 peptides that are cross-linked by 7 disulfide bridges. The basic subunit is toxic, has phospholipase A2 activity and is composed of a single chain. Ca(2+) serves as cofactor. In terms of tissue distribution, expressed by the venom gland.

The protein resides in the secreted. The enzyme catalyses a 1,2-diacyl-sn-glycero-3-phosphocholine + H2O = a 1-acyl-sn-glycero-3-phosphocholine + a fatty acid + H(+). Its function is as follows. Snake venom phospholipase A2 (PLA2) that inhibits neuromuscular transmission by blocking acetylcholine release from the nerve termini. PLA2 catalyzes the calcium-dependent hydrolysis of the 2-acyl groups in 3-sn-phosphoglycerides. This is Basic phospholipase A2 Mtx-b from Crotalus scutulatus scutulatus (Mojave rattlesnake).